A 299-amino-acid polypeptide reads, in one-letter code: Probable alpha-L-glutamate ligase (299 aa).

The ATP-grasp domain maps to 104 to 287 (LQLLAREGIE…VSGKIIEFLE (184 aa)). ATP is bound by residues Lys141, 178-179 (EF), Asp187, and 211-213 (RSN). Mg(2+)-binding residues include Asp248, Glu260, and Asn262. Mn(2+) is bound by residues Asp248, Glu260, and Asn262.

This sequence belongs to the RimK family. Mg(2+) serves as cofactor. It depends on Mn(2+) as a cofactor.

The polypeptide is Probable alpha-L-glutamate ligase (Trichodesmium erythraeum (strain IMS101)).